The sequence spans 88 residues: MANSKSAKKRALQSEKRRQHNASRRSMLRTYVKKVIAAIKAGDHKTATEAFAVAQPIVDRMATKGLIHKNKAARQKARLNAKIKAIAA.

The disordered stretch occupies residues 1–27 (MANSKSAKKRALQSEKRRQHNASRRSM).

Belongs to the bacterial ribosomal protein bS20 family.

In terms of biological role, binds directly to 16S ribosomal RNA. This chain is Small ribosomal subunit protein bS20, found in Shewanella putrefaciens (strain CN-32 / ATCC BAA-453).